The sequence spans 923 residues: Hexokinase-3 (923 aa).

Residues 1-18 (MDSIGSSGLRQGEETLSC) are compositionally biased toward polar residues. The disordered stretch occupies residues 1-30 (MDSIGSSGLRQGEETLSCSEEGLPGPSDSS). Hexokinase domains lie at 27–471 (SDSS…MVTA) and 477–912 (AAHR…LVTA). Residues 84 to 220 (HGTEQGDFVV…AYNIDVVAVV (137 aa)) form a hexokinase small subdomain 1 region. Position 95–102 (95–102 (ELGATGAS)) interacts with ATP. D-glucose 6-phosphate is bound at residue 95–104 (ELGATGASLR). D-glucose is bound by residues S168, 185 to 186 (TK), and 221 to 222 (ND). The tract at residues 221–460 (NDTVGTMMGC…CDVSLIPSVD (240 aa)) is hexokinase large subdomain 1. Residues D222 and T245 each contribute to the D-glucose 6-phosphate site. Residues N248, E273, and 304–307 (QRFE) each bind D-glucose. 426 to 428 (GGR) contacts D-glucose 6-phosphate. ATP contacts are provided by residues 438 to 439 (SV) and 542 to 547 (DLGGTN). Residues 531 to 661 (DGSERGDFLA…AVELNVVAIV (131 aa)) form a hexokinase small subdomain 2 region. 542–546 (DLGGT) serves as a coordination point for D-glucose 6-phosphate. D-glucose-binding positions include 609–610 (SF), 626–627 (TK), and 662–663 (ND). Residues 662–901 (NDTVGTMMSC…CVVTFLQSED (240 aa)) are hexokinase large subdomain 2. D-glucose 6-phosphate contacts are provided by D663 and T686. Position 686 (T686) interacts with ATP. D-glucose is bound by residues 688 to 689 (TN), E714, and E748. Residues 753–754 (GM), 790–794 (TKFLS), and 869–873 (TLYKL) contribute to the ATP site. Residues 867–869 (DGT) and S903 each bind D-glucose 6-phosphate.

Belongs to the hexokinase family.

It catalyses the reaction a D-hexose + ATP = a D-hexose 6-phosphate + ADP + H(+). The enzyme catalyses D-fructose + ATP = D-fructose 6-phosphate + ADP + H(+). It carries out the reaction D-glucose + ATP = D-glucose 6-phosphate + ADP + H(+). It participates in carbohydrate metabolism; hexose metabolism. It functions in the pathway carbohydrate degradation; glycolysis; D-glyceraldehyde 3-phosphate and glycerone phosphate from D-glucose: step 1/4. With respect to regulation, hexokinase is an allosteric enzyme inhibited by its product D-glucose 6-phosphate. Functionally, catalyzes the phosphorylation of hexose, such as D-glucose and D-fructose, to hexose 6-phosphate (D-glucose 6-phosphate and D-fructose 6-phosphate, respectively). Mediates the initial step of glycolysis by catalyzing phosphorylation of D-glucose to D-glucose 6-phosphate. The polypeptide is Hexokinase-3 (Homo sapiens (Human)).